Consider the following 294-residue polypeptide: GDP-6-deoxy-D-talose 4-dehydrogenase (294 aa).

NAD(+)-binding positions include 11-12 (FI), 38-39 (DL), 60-64 (LAALT), Thr104, Tyr128, Lys132, and Phe154. Substrate is bound by residues Thr104 and Tyr128. Residue Tyr128 is the Proton acceptor of the active site. 2 residues coordinate substrate: Asn155 and Arg190.

It belongs to the NAD(P)-dependent epimerase/dehydratase family.

It catalyses the reaction GDP-6-deoxy-alpha-D-talose + NAD(+) = GDP-4-dehydro-alpha-D-rhamnose + NADH + H(+). The catalysed reaction is GDP-6-deoxy-alpha-D-talose + NADP(+) = GDP-4-dehydro-alpha-D-rhamnose + NADPH + H(+). It participates in bacterial outer membrane biogenesis; LPS O-antigen biosynthesis. Its function is as follows. Catalyzes the conversion of GDP-4-dehydro-6-deoxy-D-mannose to GDP-6-deoxy-D-talose. The sequence is that of GDP-6-deoxy-D-talose 4-dehydrogenase (tld) from Aggregatibacter actinomycetemcomitans (Actinobacillus actinomycetemcomitans).